A 708-amino-acid chain; its full sequence is Tryptophan synthase (708 aa).

A tryptophan synthase alpha chain region spans residues 1–305 (MEGIKQTFQR…EADIDAQLAA (305 aa)). Active-site proton acceptor residues include glutamate 49 and aspartate 60. The tract at residues 306–708 (LHGTIPKRFG…GPKIGWDLRF (403 aa)) is tryptophan synthase beta chain. An N6-(pyridoxal phosphate)lysine modification is found at lysine 392.

This sequence in the N-terminal section; belongs to the TrpA family. It in the C-terminal section; belongs to the TrpB family. Pyridoxal 5'-phosphate serves as cofactor.

It carries out the reaction (1S,2R)-1-C-(indol-3-yl)glycerol 3-phosphate + L-serine = D-glyceraldehyde 3-phosphate + L-tryptophan + H2O. Its pathway is amino-acid biosynthesis; L-tryptophan biosynthesis; L-tryptophan from chorismate: step 5/5. The polypeptide is Tryptophan synthase (trp-3) (Neurospora crassa (strain ATCC 24698 / 74-OR23-1A / CBS 708.71 / DSM 1257 / FGSC 987)).